We begin with the raw amino-acid sequence, 215 residues long: Protein Syd (215 aa).

This sequence belongs to the Syd family.

It is found in the cell inner membrane. In terms of biological role, interacts with the SecY protein in vivo. May bind preferentially to an uncomplexed state of SecY, thus functioning either as a chelating agent for excess SecY in the cell or as a regulatory factor that negatively controls the translocase function. In Shewanella piezotolerans (strain WP3 / JCM 13877), this protein is Protein Syd.